The primary structure comprises 392 residues: Fasciculation and elongation protein zeta-1 (392 aa).

The interval 1–36 (MEAPLVSLDEEFEDIRPSCTEEPEEKPQCLYGTSPH) is disordered. Serine 58 bears the Phosphoserine mark. Positions 175–196 (MQNSPDPEEEEEVLEEEDGGEI) are disordered. Positions 180–194 (DPEEEEEVLEEEDGG) are enriched in acidic residues. Residues 230–298 (SELTELLDRV…KKRRKEKGLS (69 aa)) are a coiled coil. 2 positions are modified to phosphoserine: serine 298 and serine 316.

Belongs to the zygin family. As to quaternary structure, homodimer. Interacts with the NH2-terminal variable region (V1) of PKC zeta and weakly with that of PKC epsilon. Interacts with UBE4B and SAP30L. Interacts with SCOC and ULK1; SCOC interferes with ULK1-binding to FEZ1. Directly interacts with SCOC and UVRAG. Stabilizes the interaction between SCOC and UVRAG during amino acid starvation. Post-translationally, phosphorylated by protein kinase C zeta; which enhances interaction with UBE4B and polyubiquitination. Polyubiquitinated in a UBE4B-dependent manner; which does not lead to proteasomal degradation and may be important for neurogenic activity. Polyubiquitin linkage seems to be mainly through Lys-26.

The protein localises to the cytoplasm. The protein resides in the cytoskeleton. Its subcellular location is the microtubule organizing center. It localises to the centrosome. It is found in the cell membrane. May be involved in axonal outgrowth as component of the network of molecules that regulate cellular morphology and axon guidance machinery. May participate in the transport of mitochondria and other cargos along microtubules. This Mus musculus (Mouse) protein is Fasciculation and elongation protein zeta-1 (Fez1).